A 142-amino-acid polypeptide reads, in one-letter code: uncharacterized protein (142 aa).

The region spanning 18-137 is the Peptidase C39 domain; the sequence is QSRSYSCGPA…RIFTGNVLVV (120 aa).

This is an uncharacterized protein from Methanothermobacter thermautotrophicus (strain ATCC 29096 / DSM 1053 / JCM 10044 / NBRC 100330 / Delta H) (Methanobacterium thermoautotrophicum).